The following is an 826-amino-acid chain: E3 ubiquitin ligase PARAQUAT TOLERANCE 3 (826 aa).

The region spanning 3–76 (IYYKFKSARD…NTSVLIRRVP (74 aa)) is the DWNN domain. A CCHC-type zinc finger spans residues 203 to 216 (CHRCNVSGHFIQHC). Ser-278 is subject to Phosphoserine. The RING-type; degenerate zinc-finger motif lies at 288–326 (CPLCKEVMRDAALASKCCLKSYCDKCIRDHIIAKSMCVC). 3 stretches are compositionally biased toward polar residues: residues 356-365 (SAENAGSMCQ), 396-406 (PSNNNETSTLK), and 435-454 (NIQG…NTQP). 3 disordered regions span residues 356-406 (SAEN…STLK), 435-488 (NIQG…GPDY), and 585-826 (HPIM…RARA). At Ser-397 the chain carries Phosphoserine. Residues 588–624 (MGREEFEAKKTEMKRKRENEIRRSEGGNVVRDSEKSR) are compositionally biased toward basic and acidic residues. Polar residues predominate over residues 625–635 (IMNNSAVTSSP). The segment covering 651-667 (DYDRRRRSDRSSPERQS) has biased composition (basic and acidic residues). 2 consecutive short sequence motifs (nuclear localization signal) follow at residues 668-675 (SRRFTSPP) and 695-702 (DRRRDRPR). The segment covering 680–706 (RKSERDRHHDLDSEHDRRRDRPRETDR) has biased composition (basic and acidic residues). Basic residues predominate over residues 790–799 (FKRKPSRYKR). Position 800 is a phosphoserine (Ser-800). Over residues 809–826 (GDEHFRHSKRSKGERARA) the composition is skewed to basic and acidic residues.

As to quaternary structure, interacts with PRMT13/PRMT4B in the nucleus. In terms of tissue distribution, expressed constitutively in both shoot and root tissues.

The protein localises to the nucleus. It carries out the reaction S-ubiquitinyl-[E2 ubiquitin-conjugating enzyme]-L-cysteine + [acceptor protein]-L-lysine = [E2 ubiquitin-conjugating enzyme]-L-cysteine + N(6)-ubiquitinyl-[acceptor protein]-L-lysine.. Functionally, E3 ubiquitin ligase acting as a negative regulator of oxidative stress tolerance, probably by mediating 26S proteasome-mediated degradation of PRMT13/PRMT4B, thus preventing APX1 and GPX1 accumulation via the reduction of histone H3 methylation (H3R17me2a). Confers sensitivity to cadmium CdCl(2) and salt NaCl stresses. The sequence is that of E3 ubiquitin ligase PARAQUAT TOLERANCE 3 from Arabidopsis thaliana (Mouse-ear cress).